The sequence spans 462 residues: Histidine--tRNA ligase (462 aa).

Belongs to the class-II aminoacyl-tRNA synthetase family. As to quaternary structure, homodimer.

It is found in the cytoplasm. The catalysed reaction is tRNA(His) + L-histidine + ATP = L-histidyl-tRNA(His) + AMP + diphosphate + H(+). The polypeptide is Histidine--tRNA ligase (hisS) (Nostoc sp. (strain PCC 7120 / SAG 25.82 / UTEX 2576)).